A 359-amino-acid polypeptide reads, in one-letter code: Peptide chain release factor 1 (359 aa).

Q235 carries the post-translational modification N5-methylglutamine. The interval 283–309 is disordered; that stretch reads QKAESERSQARRSQVGSGDRSERIRTY.

It belongs to the prokaryotic/mitochondrial release factor family. Post-translationally, methylated by PrmC. Methylation increases the termination efficiency of RF1.

The protein localises to the cytoplasm. In terms of biological role, peptide chain release factor 1 directs the termination of translation in response to the peptide chain termination codons UAG and UAA. The chain is Peptide chain release factor 1 from Brucella suis (strain ATCC 23445 / NCTC 10510).